The chain runs to 425 residues: GTPase Obg (425 aa).

Positions 1-158 (MFKDYAKIHV…LWLELELKLL (158 aa)) constitute an Obg domain. The region spanning 159-329 (ADVGLVGFPN…LIYRTYRLLE (171 aa)) is the OBG-type G domain. GTP is bound by residues 165-172 (GFPNAGKS), 190-194 (FTTLE), 212-215 (DIPG), 282-285 (NKTD), and 310-312 (SAL). Residues Ser172 and Thr192 each coordinate Mg(2+). Residues 341–421 (VPDERETDVT…IGRFEFEYSE (81 aa)) form the OCT domain.

It belongs to the TRAFAC class OBG-HflX-like GTPase superfamily. OBG GTPase family. In terms of assembly, monomer. Requires Mg(2+) as cofactor.

The protein resides in the cytoplasm. Functionally, an essential GTPase which binds GTP, GDP and possibly (p)ppGpp with moderate affinity, with high nucleotide exchange rates and a fairly low GTP hydrolysis rate. Plays a role in control of the cell cycle, stress response, ribosome biogenesis and in those bacteria that undergo differentiation, in morphogenesis control. The protein is GTPase Obg of Desulforudis audaxviator (strain MP104C).